A 353-amino-acid polypeptide reads, in one-letter code: MSKGTVALAMSGGVDSSVSAYILKERGYDVIGIYMDLWRDEREEYCNKSAAEDARRVAEKLDIPFHVINIEKKFKNNVIDYFIDEYLSGRTPNPCVACNKTIKFEAFFNAAKEFGADFMATGHYCKIEERNGRKVIVKAEDDKKDQTYMMYNLKQYQLERTIMPCGEYKKDHIREIAESIGLDVYNKKDSQEICFIPDNDHGGFIKRNYKRKISEGNFVDKEGNIIGKHKGIIYYTIGQRKGLGIALGKPAYVIDINPITNEVVIGEEEDIFRTELIAKDVNFIPFDKLEKPMELEAKVRYSAKPSKATIIPLENNKVKVVFQNKQRAITKGQSVVFYDKDILAGGGIIEGIV.

ATP-binding positions include 9 to 16 (AMSGGVDS) and M35. Residue C98 is the Nucleophile of the active site. An intrachain disulfide couples C98 to C194. ATP is bound at residue G122. An interaction with tRNA region spans residues 144-146 (KDQ). C194 serves as the catalytic Cysteine persulfide intermediate. The interaction with tRNA stretch occupies residues 300–301 (RY).

Belongs to the MnmA/TRMU family.

The protein resides in the cytoplasm. It carries out the reaction S-sulfanyl-L-cysteinyl-[protein] + uridine(34) in tRNA + AH2 + ATP = 2-thiouridine(34) in tRNA + L-cysteinyl-[protein] + A + AMP + diphosphate + H(+). Functionally, catalyzes the 2-thiolation of uridine at the wobble position (U34) of tRNA, leading to the formation of s(2)U34. This Clostridium botulinum (strain Langeland / NCTC 10281 / Type F) protein is tRNA-specific 2-thiouridylase MnmA 2.